The following is a 273-amino-acid chain: Diadenylate cyclase (273 aa).

3 helical membrane passes run 12-32 (LANI…IMLI), 37-57 (AVQL…SGFF), and 61-81 (TVEW…IIIF). Residues 82 to 242 (QPELRRALET…GGELFRDVSE (161 aa)) form the DAC domain.

The protein belongs to the adenylate cyclase family. DacA/CdaA subfamily. As to quaternary structure, probably a homodimer.

Its subcellular location is the cell membrane. It catalyses the reaction 2 ATP = 3',3'-c-di-AMP + 2 diphosphate. In terms of biological role, catalyzes the condensation of 2 ATP molecules into cyclic di-AMP (c-di-AMP), a signaling compound secreted into the host's cytosol where it triggers the cytosolic surveillance pathway (CSP), a host pathway of innate immunity characterized by expression of beta interferon (IFN-beta) and coregulated genes. Overexpression increases export of c-di-AMP. c-di-AMP is a second messenger that mediates growth, cell wall stability and virulence. In Listeria monocytogenes serotype 1/2a (strain 10403S), this protein is Diadenylate cyclase.